The following is a 131-amino-acid chain: Transcription antitermination protein NusB (131 aa).

The protein belongs to the NusB family.

Its function is as follows. Involved in transcription antitermination. Required for transcription of ribosomal RNA (rRNA) genes. Binds specifically to the boxA antiterminator sequence of the ribosomal RNA (rrn) operons. The protein is Transcription antitermination protein NusB of Campylobacter hominis (strain ATCC BAA-381 / DSM 21671 / CCUG 45161 / LMG 19568 / NCTC 13146 / CH001A).